The sequence spans 252 residues: 3-deoxy-manno-octulosonate cytidylyltransferase (252 aa).

This sequence belongs to the KdsB family.

The protein localises to the cytoplasm. The enzyme catalyses 3-deoxy-alpha-D-manno-oct-2-ulosonate + CTP = CMP-3-deoxy-beta-D-manno-octulosonate + diphosphate. It participates in nucleotide-sugar biosynthesis; CMP-3-deoxy-D-manno-octulosonate biosynthesis; CMP-3-deoxy-D-manno-octulosonate from 3-deoxy-D-manno-octulosonate and CTP: step 1/1. The protein operates within bacterial outer membrane biogenesis; lipopolysaccharide biosynthesis. Functionally, activates KDO (a required 8-carbon sugar) for incorporation into bacterial lipopolysaccharide in Gram-negative bacteria. This Nitratidesulfovibrio vulgaris (strain ATCC 29579 / DSM 644 / CCUG 34227 / NCIMB 8303 / VKM B-1760 / Hildenborough) (Desulfovibrio vulgaris) protein is 3-deoxy-manno-octulosonate cytidylyltransferase.